Here is a 379-residue protein sequence, read N- to C-terminus: Cytochrome b (379 aa).

Helical transmembrane passes span Phe33 to Met53, Trp77 to Val98, Trp113 to Leu133, and Phe178 to Leu198. Heme b contacts are provided by His83 and His97. Residues His182 and His196 each contribute to the heme b site. His201 contributes to the a ubiquinone binding site. A run of 4 helical transmembrane segments spans residues Ile226–Phe246, Leu288–Asn308, Val320–Gly340, and Phe347–Pro367.

Belongs to the cytochrome b family. In terms of assembly, the cytochrome bc1 complex contains 11 subunits: 3 respiratory subunits (MT-CYB, CYC1 and UQCRFS1), 2 core proteins (UQCRC1 and UQCRC2) and 6 low-molecular weight proteins (UQCRH/QCR6, UQCRB/QCR7, UQCRQ/QCR8, UQCR10/QCR9, UQCR11/QCR10 and a cleavage product of UQCRFS1). This cytochrome bc1 complex then forms a dimer. Heme b serves as cofactor.

It localises to the mitochondrion inner membrane. Its function is as follows. Component of the ubiquinol-cytochrome c reductase complex (complex III or cytochrome b-c1 complex) that is part of the mitochondrial respiratory chain. The b-c1 complex mediates electron transfer from ubiquinol to cytochrome c. Contributes to the generation of a proton gradient across the mitochondrial membrane that is then used for ATP synthesis. This is Cytochrome b (MT-CYB) from Akodon lindberghi (Lindbergh's grass mouse).